Reading from the N-terminus, the 102-residue chain is MDNLSAQLENQIDELKKLQKSVITYEQAQRQQLYAGKITDLKAFGKMLNDKRKSLGIELSMLELQTGVSISTLNRLFQDPSQVRFTTVFLVAQTLGVSLCAI.

The HTH cro/C1-type domain maps to 48 to 102 (LNDKRKSLGIELSMLELQTGVSISTLNRLFQDPSQVRFTTVFLVAQTLGVSLCAI). Residues 59–78 (LSMLELQTGVSISTLNRLFQ) constitute a DNA-binding region (H-T-H motif).

This is an uncharacterized protein from Haemophilus influenzae (strain ATCC 51907 / DSM 11121 / KW20 / Rd).